The primary structure comprises 343 residues: Fructose-1,6-bisphosphatase class 1 (343 aa).

Mg(2+) contacts are provided by Glu90, Asp109, Leu111, and Asp112. Substrate is bound by residues 112–115 and Asn199; that span reads DGSS. Mg(2+) is bound at residue Glu271.

This sequence belongs to the FBPase class 1 family. In terms of assembly, homotetramer. It depends on Mg(2+) as a cofactor.

The protein resides in the cytoplasm. It catalyses the reaction beta-D-fructose 1,6-bisphosphate + H2O = beta-D-fructose 6-phosphate + phosphate. It participates in carbohydrate biosynthesis; Calvin cycle. The sequence is that of Fructose-1,6-bisphosphatase class 1 from Rhodopseudomonas palustris (strain HaA2).